Consider the following 374-residue polypeptide: Double homeobox protein 4C (374 aa).

Residues 1-10 (MALPTPSDST) show a composition bias toward polar residues. Disordered regions lie at residues 1 to 24 (MALPTPSDSTLPAEARGRGRRRRL), 72 to 102 (SRQLRQHRRESRPWPGRRGPPEGRRKRTAVT), and 218 to 374 (LQPS…YELL). DNA-binding regions (homeobox) lie at residues 19–78 (GRRR…LRQH) and 94–153 (GRRK…PGQG). Over residues 265 to 274 (KSREDRDPQR) the composition is skewed to basic and acidic residues. Composition is skewed to low complexity over residues 278 to 302 (PGPCAVAQPGPAQAGPQGQGVLAPP) and 319 to 329 (AGAAWEPQAGA). Polar residues predominate over residues 354–374 (QPLQEPGRSSTVTSSLLYELL).

May interact with MYF5; regulates MYF5 expression. Expressed in muscles, as well as in primary myoblasts and myotubes (at protein level).

The protein resides in the nucleus. Its subcellular location is the cytoplasm. Functionally, down-regulates MYOD1 expression and may up-regulate MYF5 expression. May regulate microRNA (miRNA) transcription, up-regulating the expression of some myogenic miRNAs, including MIR1-1, MIR133A2, MIR133B and MIR206. Impairs the differentiation of myoblasts and may be involved in muscle regeneration. Reduces DUX4-induced nuclear localization of CTNNB1/beta-catenin and its subsequent activation of target genes. The chain is Double homeobox protein 4C (DUX4L9) from Homo sapiens (Human).